Here is a 61-residue protein sequence, read N- to C-terminus: Putative antitoxin PYRAB11980 (61 aa).

The protein belongs to the UPF0165 family.

Its function is as follows. Possibly the antitoxin component of a type II toxin-antitoxin (TA) system. This is Putative antitoxin PYRAB11980 from Pyrococcus abyssi (strain GE5 / Orsay).